A 555-amino-acid chain; its full sequence is Cyclin-T1.2 (555 aa).

2 disordered regions span residues 315 to 429 (SYKG…NSSK) and 505 to 555 (PADS…GELV). Residues 321–335 (KPLSNSSDSPSTRPS) show a composition bias toward low complexity. Positions 341–359 (KNQKVVEQELMEQRMKEAA) are enriched in basic and acidic residues. Low complexity predominate over residues 382–398 (TSSSASNNSNHQNRSSS). Over residues 521-543 (PDEPSPPVSQILLPPPPPPPILP) the composition is skewed to pro residues.

It belongs to the cyclin family. Cyclin C subfamily.

In terms of biological role, regulatory subunit of the cyclin-dependent kinase pair (CDK9/cyclin T) complex, also called positive transcription elongation factor B (P-TEFb), which is proposed to facilitate the transition from abortive to production elongation by phosphorylating the CTD (carboxy-terminal domain) of the large subunit of RNA polymerase II (RNAP II). This Caenorhabditis elegans protein is Cyclin-T1.2 (cit-1.2).